Here is a 417-residue protein sequence, read N- to C-terminus: Voltage-gated potassium channel Kch (417 aa).

Residues 1–21 are Cytoplasmic-facing; the sequence is MSHWATFKQTATNLWVTLRHD. Residues 22 to 41 form a helical membrane-spanning segment; that stretch reads ILALAVFLNGLLIFKTIYGM. The Periplasmic portion of the chain corresponds to 42 to 63; that stretch reads SVNLLDIFHIKAFSELDLSLLA. The chain crosses the membrane as a helical span at residues 64–83; the sequence is NAPLFMLGVFLVLNSIGLLF. Topologically, residues 84 to 86 are cytoplasmic; the sequence is RAK. Residues 87 to 104 traverse the membrane as a helical segment; that stretch reads LAWAISIILLLIALIYTL. Residues 105–110 lie on the Periplasmic side of the membrane; that stretch reads HFYPWL. A helical transmembrane segment spans residues 111-127; it reads KFSIGFCIFTLVFLLIL. Residues 128-140 lie on the Cytoplasmic side of the membrane; it reads RKDFSHSSAAAGT. Residues 141-160 form a helical membrane-spanning segment; the sequence is IFAFISFTTLLFYSTYGALY. Over 161–199 the chain is Periplasmic; that stretch reads LSEGFNPRIESLMTAFYFSIETMSTVGYGDIVPVSESAR. A Selectivity filter motif is present at residues 185-190; it reads TVGYGD. The chain crosses the membrane as a helical span at residues 200-220; it reads LFTISVIISGITVFATSMTSI. The Cytoplasmic segment spans residues 221-417; it reads FGPLIRGGFN…KADSKESAQK (197 aa). The 121-residue stretch at 243–363 folds into the RCK N-terminal domain; that stretch reads KDHFIVCGHS…IKMVHPDIIL (121 aa).

It belongs to the potassium channel family. In terms of assembly, dimer.

It is found in the cell inner membrane. K(+)-specific ion channel. May play a role in the defense against osmotic shock. This Escherichia coli (strain K12) protein is Voltage-gated potassium channel Kch (kch).